The sequence spans 214 residues: Phosphopantothenoylcysteine decarboxylase HAL3 (214 aa).

FMN-binding positions include 30-32 and 55-57; these read GSV and TRA. The active-site Proton donor is the His92. FMN-binding positions include 108–111 and Ala142; that span reads SANT. N-[(R)-4-phosphopantothenoyl]-L-cysteine contacts are provided by Asn144, Arg174, and Ala176. Catalysis depends on Cys177, which acts as the Proton donor. Met185 is a binding site for N-[(R)-4-phosphopantothenoyl]-L-cysteine.

This sequence belongs to the HFCD (homooligomeric flavin containing Cys decarboxylase) superfamily. Homotrimer. Requires FMN as cofactor. In terms of tissue distribution, mainly expressed in stems, to a lower extent in flowers, leaves and fruits, and at basal levels in roots.

It is found in the cell membrane. Its subcellular location is the cytoplasm. It carries out the reaction N-[(R)-4-phosphopantothenoyl]-L-cysteine + H(+) = (R)-4'-phosphopantetheine + CO2. It participates in cofactor biosynthesis; coenzyme A biosynthesis; CoA from (R)-pantothenate: step 3/5. Functionally, involved in plant growth, and promotes salt and osmotic tolerance, probably via coenzyme A (CoA) accumulation and endogenous proline accumulation. Catalyzes the decarboxylation of 4'-phosphopantothenoylcysteine to 4'-phosphopantetheine, a key step in coenzyme A biosynthesis. Required for roots development. In Malus domestica (Apple), this protein is Phosphopantothenoylcysteine decarboxylase HAL3.